The chain runs to 542 residues: Nuclear speckle splicing regulatory protein 1 (542 aa).

The disordered stretch occupies residues 21–53; sequence RVLQKPSVFGSDSDDDETSVSESLQREAAKKQA. 3 positions are modified to phosphoserine: serine 27, serine 31, and serine 33. A coiled-coil region spans residues 103–172; it reads IHNLLKAVEI…RAAALEAHLD (70 aa). A necessary for alternative splicing activity region spans residues 105-169; that stretch reads NLLKAVEIRK…REKRAAALEA (65 aa). The disordered stretch occupies residues 190–516; it reads AVGEEAAPKS…FAKRSNEETV (327 aa). Glycyl lysine isopeptide (Lys-Gly) (interchain with G-Cter in SUMO2) cross-links involve residues lysine 198 and lysine 209. The span at 200 to 217 shows a compositional bias: basic and acidic residues; that stretch reads SFREARTVIKEEKLRGYP. The segment covering 223 to 232 has biased composition (polar residues); the sequence is ESRPPQQSCV. Residues 239–256 show a composition bias toward acidic residues; it reads EAEENPDADREFDDESSE. 2 positions are modified to phosphoserine: serine 254 and serine 255. The span at 257–271 shows a compositional bias: basic and acidic residues; the sequence is DGEKRDHKVKSRGED. Lysine 277 is modified (N6-acetyllysine). Basic residues predominate over residues 277–288; the sequence is KHPKHHKNRAHS. Residue lysine 280 forms a Glycyl lysine isopeptide (Lys-Gly) (interchain with G-Cter in SUMO2) linkage. 3 stretches are compositionally biased toward basic and acidic residues: residues 309–335, 343–475, and 485–501; these read RGHE…EEKS, SHKD…KPSH, and RLAE…ERPP. Residues 372–413 adopt a coiled-coil conformation; the sequence is KREKYSSREQERDRQRNDHDRYSEKEKKRKEKEEHTKARRER. Serine 443 is subject to Phosphoserine.

Belongs to the NSRP1 family. As to quaternary structure, interacts (via C-terminus) with SRSF1. Interacts (via C-terminus) with SRSF2.

It localises to the nucleus. It is found in the nucleus speckle. Its function is as follows. RNA-binding protein that mediates pre-mRNA alternative splicing regulation. The polypeptide is Nuclear speckle splicing regulatory protein 1 (Nsrp1) (Mus musculus (Mouse)).